The primary structure comprises 220 residues: Type II restriction enzyme NspV (220 aa).

It catalyses the reaction Endonucleolytic cleavage of DNA to give specific double-stranded fragments with terminal 5'-phosphates.. In terms of biological role, a P subtype restriction enzyme that recognizes the double-stranded sequence 5'-TTCGAA-3' and cleaves after T-2. The chain is Type II restriction enzyme NspV from Nostoc sp. (strain ATCC 29411 / PCC 7524).